A 535-amino-acid chain; its full sequence is CTP synthase (535 aa).

The interval 1–267 is amidoligase domain; the sequence is MTKYIFVTGG…DQIVCDHLKL (267 aa). Residue Ser13 participates in CTP binding. Ser13 provides a ligand contact to UTP. 14–19 lines the ATP pocket; it reads SLGKGI. Tyr54 is an L-glutamine binding site. Residue Asp71 participates in ATP binding. 2 residues coordinate Mg(2+): Asp71 and Glu141. CTP-binding positions include 148 to 150, 188 to 193, and Lys224; these read DIE and KTKPTQ. Residues 188 to 193 and Lys224 each bind UTP; that span reads KTKPTQ. An ATP-binding site is contributed by 240 to 242; that stretch reads RDA. In terms of domain architecture, Glutamine amidotransferase type-1 spans 292 to 534; sequence KIALVGKYVE…VRASITNKES (243 aa). Gly354 is an L-glutamine binding site. Cys381 serves as the catalytic Nucleophile; for glutamine hydrolysis. L-glutamine-binding positions include 382–385, Glu405, and Arg462; that span reads LGMQ. Active-site residues include His507 and Glu509.

Belongs to the CTP synthase family. In terms of assembly, homotetramer.

The enzyme catalyses UTP + L-glutamine + ATP + H2O = CTP + L-glutamate + ADP + phosphate + 2 H(+). The catalysed reaction is L-glutamine + H2O = L-glutamate + NH4(+). It catalyses the reaction UTP + NH4(+) + ATP = CTP + ADP + phosphate + 2 H(+). It functions in the pathway pyrimidine metabolism; CTP biosynthesis via de novo pathway; CTP from UDP: step 2/2. Its activity is regulated as follows. Allosterically activated by GTP, when glutamine is the substrate; GTP has no effect on the reaction when ammonia is the substrate. The allosteric effector GTP functions by stabilizing the protein conformation that binds the tetrahedral intermediate(s) formed during glutamine hydrolysis. Inhibited by the product CTP, via allosteric rather than competitive inhibition. Its function is as follows. Catalyzes the ATP-dependent amination of UTP to CTP with either L-glutamine or ammonia as the source of nitrogen. Regulates intracellular CTP levels through interactions with the four ribonucleotide triphosphates. This is CTP synthase from Bacillus cereus (strain AH187).